Reading from the N-terminus, the 1190-residue chain is DNA-directed RNA polymerase subunit beta (1190 aa).

Belongs to the RNA polymerase beta chain family. The RNAP catalytic core consists of 2 alpha, 1 beta, 1 beta' and 1 omega subunit. When a sigma factor is associated with the core the holoenzyme is formed, which can initiate transcription.

The catalysed reaction is RNA(n) + a ribonucleoside 5'-triphosphate = RNA(n+1) + diphosphate. Its function is as follows. DNA-dependent RNA polymerase catalyzes the transcription of DNA into RNA using the four ribonucleoside triphosphates as substrates. This chain is DNA-directed RNA polymerase subunit beta, found in Geobacillus thermodenitrificans (strain NG80-2).